The sequence spans 360 residues: Variable large protein 14 (360 aa).

A signal peptide spans 1-18; the sequence is MRKRISAIIMTLFMVLAS. Cysteine 19 carries the N-palmitoyl cysteine lipid modification. Cysteine 19 is lipidated: S-diacylglycerol cysteine.

Belongs to the variable large protein (Vlp) family. Beta subfamily.

The protein localises to the cell outer membrane. Functionally, the Vlp and Vsp proteins are antigenically distinct proteins, only one vlp or vsp gene is transcriptionally active at any one time. Switching between these genes is a mechanism of host immune response evasion. This is Variable large protein 14 from Borrelia hermsii.